A 621-amino-acid polypeptide reads, in one-letter code: Stimulated by retinoic acid gene 6 protein-like (621 aa).

Over 1 to 21 (MLAASTRTRQINITCDNPVDR) the chain is Extracellular. Asparagine 12 is a glycosylation site (N-linked (GlcNAc...) asparagine). The helical transmembrane segment at 22–42 (EVFLHYSLIPSLCIILVLSFL) threads the bilayer. Topologically, residues 43-53 (QRREHRRQRDD) are cytoplasmic. A helical membrane pass occupies residues 54–74 (TSYLLGNHFGIIVPLDFVGTF). At 75–110 (SNRWSYGAAFGATANKVMFLFSEGYQPLTVPQWAQA) the chain is on the extracellular side. A helical transmembrane segment spans residues 111 to 131 (FVLFIGGMEVGLSYFPFFACL). Topologically, residues 132–137 (SSEFQL) are cytoplasmic. A helical membrane pass occupies residues 138-158 (VSSILGFSYSLTWFVVTVLQI). Residues 159–173 (SQCPHGQFLGRFETL) are Extracellular-facing. Residues 174–194 (VFYWPSLLCLGFLLGRFLHMF) form a helical membrane-spanning segment. The Cytoplasmic portion of the chain corresponds to 195-258 (LKALPVHLGL…CFQFPSRMVG (64 aa)). A helical transmembrane segment spans residues 259-279 (TLLLAFICLYLFIVIEFCVFL). Topologically, residues 280–321 (HVRDKLDMFEDKLESYLTHMNETGTLTPIILQVKELISVTKG) are extracellular. A helical transmembrane segment spans residues 322 to 342 (VWVVTILPAALTCVTYLFHIL). Residues 343–383 (ACYRKHMKRLWAGDKHFLPQKFHSPSSAASVVAIARYSGWQ) lie on the Cytoplasmic side of the membrane. Residues 384–404 (IAYILWGYLIIHVVQSLCGVM) traverse the membrane as a helical segment. The Extracellular segment spans residues 405 to 424 (LMYGLVLPIIHHRGLEMLQG). Residues 425–445 (FGLGVLTLSIVVGLIILQVWI) traverse the membrane as a helical segment. Residues 446–476 (AGTFFLQPKLGTSDKQKPLALNNRRAFHNFN) are Cytoplasmic-facing. A helical membrane pass occupies residues 477–497 (YFLFFYNVLLGLGACLSRLLI). Topologically, residues 498 to 621 (SCLLGTWLIA…TQILLTCSDC (124 aa)) are extracellular. At threonine 612 the chain carries Phosphothreonine.

In terms of processing, glycosylated. Highly expressed in liver and small intestine. Also expressed in spleen, kidney, colon, stomach, placenta, adipose tissue and isolated adipocytes.

Its subcellular location is the cell membrane. Functionally, acts as a high-affinity cell-surface receptor for retinol-binding protein RBP4 and mediates RBP4-dependent retinol uptake in the liver. This chain is Stimulated by retinoic acid gene 6 protein-like, found in Mus musculus (Mouse).